Consider the following 424-residue polypeptide: Oleosin-B3 (424 aa).

The polar stretch occupies residues 1–37; it reads MRNEIQNETAQTDQTQGSMFSFFNLFPFLLPMFEVIK. Helical transmembrane passes span 16–36, 38–58, and 69–89; these read QGSMFSFFNLFPFLLPMFEVI, MVVASVASVVYLGFAGVTLSG, and LFIIFSPILLPAIAATTVLAA. The hydrophobic stretch occupies residues 38 to 119; the sequence is MVVASVASVV…GIPESIKPSN (82 aa). Repeat copies occupy residues 111–120, 121–130, 131–140, 141–150, 196–202, 203–209, 210–216, 217–223, 241–258, 259–276, 277–294, 301–318, 319–336, 337–354, 396–400, 401–405, 406–410, and 411–415. The tract at residues 111–150 is 4 X 10 AA tandem repeats of I-P-[EV]-S-I-K-P-S-N-[IV]; the sequence is IPESIKPSNVIPESIKPSNIIPESIKPSNIIPVSIKPSNI. The interval 164–424 is disordered; sequence KIKAKQEEKS…SSHGSGGKHI (261 aa). A compositionally biased stretch (basic and acidic residues) spans 167–220; the sequence is AKQEEKSKGKSEDSSKGKGKSKGEDTTTDEDKHGKGESKHGKGESKHGKGESTH. Residues 196 to 223 form a 4 X 7 AA tandem repeats of E-[SD]-[KT]-H-G-K-G region; the sequence is EDKHGKGESKHGKGESKHGKGESTHGKG. Positions 241-354 are 6 X 18 AA tandem repeats of [KR]-H-[EG]-[SG]-G-G-[SA]-[PSA]-M-G-G-G-K-H-[GE]-S-[GV]-G; it reads KHGSGGSPMG…MGGGKHGSGG (114 aa). The span at 242–255 shows a compositional bias: gly residues; it reads HGSGGSPMGGGKHG. Positions 288–304 are enriched in basic and acidic residues; the sequence is GKHESVGKHGSGGKHES. The segment covering 341–355 has biased composition (gly residues); the sequence is GGSAMGGGKHGSGGK. Low complexity predominate over residues 391–416; that stretch reads SSTSESSDGSSSDGSSSDGSSSDGSS. A 4 X 5 AA tandem repeats of S-S-D-G-S region spans residues 396–415; the sequence is SSDGSSSDGSSSDGSSSDGS.

Belongs to the oleosin family. The full-length protein is found in the tapetal lipid bodies of immature anthers, the proteolytically cleaved C-terminal product is found on the coats of pollen grains. No expression is detected in other flower organs, siliques or seedlings.

Its subcellular location is the lipid droplet. It is found in the membrane. In terms of biological role, many of the major pollen coat proteins are derived from endoproteolytic cleavage of oleosin-like proteins. The polypeptide is Oleosin-B3 (Brassica napus (Rape)).